Reading from the N-terminus, the 184-residue chain is Bacterial microcompartment shell protein PduT (184 aa).

BMC domains follow at residues 4–86 and 96–182; these read AIGI…PAIS and AVGI…RQMV. C38 is a [4Fe-4S] cluster binding site.

Belongs to the bacterial microcompartments protein family. Homotrimerizes to form a pseudohexamer with a large central pore, which is probably the binding site for the [4Fe-4S] center. Interacts with PduS. Originally suggested to be a homotetramer; this is incorrect. Requires [4Fe-4S] cluster as cofactor.

It localises to the bacterial microcompartment. Its pathway is polyol metabolism; 1,2-propanediol degradation. Functionally, a minor shell protein of the bacterial microcompartment (BMC) dedicated to 1,2-propanediol (1,2-PD) degradation. Overexpression of this protein leads to cells with either deposits or having lamina-like structures in the cytoplasm. Not absolutely required to make artificial BMCs. May selectively transport specific metabolites. In terms of biological role, expression of a cosmid containing the full 21-gene pdu operon in E.coli allows E.coli to grow on 1,2-propanediol (1,2-PD) with the appearance of bacterial microcompartments (BMC) in its cytoplasm. Its function is as follows. The 1,2-PD-specific bacterial microcompartment (BMC) concentrates low levels of 1,2-PD catabolic enzymes, concentrates volatile reaction intermediates thus enhancing pathway flux and keeps the level of toxic, mutagenic propionaldehyde low. This is Bacterial microcompartment shell protein PduT from Citrobacter freundii.